Reading from the N-terminus, the 199-residue chain is COMM domain-containing protein 2 (199 aa).

The region spanning 123-190 (SYHNLEWRLD…QALEEMKTNH (68 aa)) is the COMM domain.

Belongs to the COMM domain-containing protein 2 family. As to quaternary structure, component of the commander complex consisting of the CCC subcomplex and the retriever subcomplex. Component of the CCC (COMMD/CCDC22/CCDC93) subcomplex consisting of COMMD1, COMMD2, COMMD3, COMMD4, COMMD5, COMMD6, COMMD7, COMMD8, COMMD9, COMMD10, CCDC22 and CCDC93; within the complex forms a heterodimer with COMMD3. Interacts with RELA, RELB, NFKB1/p105, NFKB2/p100. Interacts with CCDC22, CCDC93, SCNN1B, CUL3, CUL4B, CUL5, CUL7. In terms of tissue distribution, ubiquitous.

The protein localises to the cytoplasm. Scaffold protein in the commander complex that is essential for endosomal recycling of transmembrane cargos; the commander complex is composed of the CCC subcomplex and the retriever subcomplex. May modulate activity of cullin-RING E3 ubiquitin ligase (CRL) complexes. May down-regulate activation of NF-kappa-B. This Homo sapiens (Human) protein is COMM domain-containing protein 2 (COMMD2).